We begin with the raw amino-acid sequence, 451 residues long: Methylenetetrahydrofolate--tRNA-(uracil-5-)-methyltransferase TrmFO (451 aa).

G18–G23 contributes to the FAD binding site.

This sequence belongs to the MnmG family. TrmFO subfamily. The cofactor is FAD.

The protein resides in the cytoplasm. It catalyses the reaction uridine(54) in tRNA + (6R)-5,10-methylene-5,6,7,8-tetrahydrofolate + NADH + H(+) = 5-methyluridine(54) in tRNA + (6S)-5,6,7,8-tetrahydrofolate + NAD(+). The catalysed reaction is uridine(54) in tRNA + (6R)-5,10-methylene-5,6,7,8-tetrahydrofolate + NADPH + H(+) = 5-methyluridine(54) in tRNA + (6S)-5,6,7,8-tetrahydrofolate + NADP(+). Its function is as follows. Catalyzes the folate-dependent formation of 5-methyl-uridine at position 54 (M-5-U54) in all tRNAs. In Synechococcus sp. (strain JA-3-3Ab) (Cyanobacteria bacterium Yellowstone A-Prime), this protein is Methylenetetrahydrofolate--tRNA-(uracil-5-)-methyltransferase TrmFO.